An 80-amino-acid chain; its full sequence is Translation initiation factor IF-1 (80 aa).

One can recognise an S1-like domain in the interval 6–80 (EKKKKDESDS…TSRGRIVYRR (75 aa)).

It belongs to the IF-1 family. As to quaternary structure, component of the 30S ribosomal translation pre-initiation complex which assembles on the 30S ribosome in the order IF-2 and IF-3, IF-1 and N-formylmethionyl-tRNA(fMet); mRNA recruitment can occur at any time during PIC assembly.

It localises to the cytoplasm. In terms of biological role, one of the essential components for the initiation of protein synthesis. Stabilizes the binding of IF-2 and IF-3 on the 30S subunit to which N-formylmethionyl-tRNA(fMet) subsequently binds. Helps modulate mRNA selection, yielding the 30S pre-initiation complex (PIC). Upon addition of the 50S ribosomal subunit IF-1, IF-2 and IF-3 are released leaving the mature 70S translation initiation complex. The chain is Translation initiation factor IF-1 from Deinococcus radiodurans (strain ATCC 13939 / DSM 20539 / JCM 16871 / CCUG 27074 / LMG 4051 / NBRC 15346 / NCIMB 9279 / VKM B-1422 / R1).